A 373-amino-acid chain; its full sequence is 3 beta-hydroxysteroid dehydrogenase/Delta 5--&gt;4-isomerase type 1 (373 aa).

NADP(+)-binding positions include 10-15 (GAGGFV), tyrosine 155, and lysine 159. The active-site Proton donor is lysine 159. The chain crosses the membrane as a helical span at residues 288–308 (LPLLYWLAFLLETVSFLLRPF).

It belongs to the 3-beta-HSD family. As to expression, adrenal glands, kidney, testes and ovaries.

It localises to the endoplasmic reticulum membrane. It is found in the mitochondrion membrane. It catalyses the reaction a 3beta-hydroxy-Delta(5)-steroid + NAD(+) = a 3-oxo-Delta(5)-steroid + NADH + H(+). The catalysed reaction is pregnenolone + NAD(+) = pregn-5-ene-3,20-dione + NADH + H(+). It carries out the reaction 3beta-hydroxyandrost-5-en-17-one + NAD(+) = androst-5-ene-3,17-dione + NADH + H(+). The enzyme catalyses androst-5-en-3beta,17beta-diol + NAD(+) = 17beta-hydroxy-androst-5-en-3-one + NADH + H(+). It catalyses the reaction a 3beta-hydroxysteroid + NADP(+) = a 3-oxosteroid + NADPH + H(+). The catalysed reaction is 5alpha-androstane-3beta,17beta-diol + NADP(+) = 17beta-hydroxy-5alpha-androstan-3-one + NADPH + H(+). It carries out the reaction 3beta-hydroxy-5alpha-androstan-17-one + NADP(+) = 5alpha-androstan-3,17-dione + NADPH + H(+). The enzyme catalyses a 3-oxo-Delta(5)-steroid = a 3-oxo-Delta(4)-steroid. It catalyses the reaction pregn-5-ene-3,20-dione = progesterone. The catalysed reaction is androst-5-ene-3,17-dione = androst-4-ene-3,17-dione. It carries out the reaction 17beta-hydroxy-androst-5-en-3-one = testosterone. The enzyme catalyses 5alpha-androstane-3beta,17beta-diol + NAD(+) = 17beta-hydroxy-5alpha-androstan-3-one + NADH + H(+). It functions in the pathway steroid hormone biosynthesis. The protein operates within steroid metabolism. Functionally, a bifunctional enzyme responsible for the oxidation and isomerization of 3beta-hydroxy-Delta(5)-steroid precursors to 3-oxo-Delta(4)-steroids, an essential step in steroid hormone biosynthesis. Specifically catalyzes the conversion of pregnenolone to progesterone, dehydroepiandrosterone (DHEA) to 4-androstenedione, and androstenediol to testosterone. Additionally, catalyzes the interconversion between 3beta-hydroxy and 3-oxo-5alpha-androstane steroids controlling the bioavalability of the active forms. Specifically converts dihydrotestosterone to its inactive form 5alpha-androstanediol, that does not bind androgen receptor/AR. Also converts androstanedione, a precursor of testosterone and estrone, to epiandrosterone. Expected to use NAD(+) as preferred electron donor for the 3beta-hydroxy-steroid dehydrogenase activity and NADPH for the 3-ketosteroid reductase activity. The chain is 3 beta-hydroxysteroid dehydrogenase/Delta 5--&gt;4-isomerase type 1 from Rattus norvegicus (Rat).